The chain runs to 26 residues: Oxyopinin-3b (26 aa).

In terms of tissue distribution, expressed by the venom gland.

It localises to the secreted. In terms of biological role, may have cytolytic and antimicrobial activity. The sequence is that of Oxyopinin-3b from Oxyopes takobius (Lynx spider).